The chain runs to 89 residues: Small ribosomal subunit protein uS15 (89 aa).

It belongs to the universal ribosomal protein uS15 family. In terms of assembly, part of the 30S ribosomal subunit. Forms a bridge to the 50S subunit in the 70S ribosome, contacting the 23S rRNA.

Functionally, one of the primary rRNA binding proteins, it binds directly to 16S rRNA where it helps nucleate assembly of the platform of the 30S subunit by binding and bridging several RNA helices of the 16S rRNA. In terms of biological role, forms an intersubunit bridge (bridge B4) with the 23S rRNA of the 50S subunit in the ribosome. In Shewanella sp. (strain ANA-3), this protein is Small ribosomal subunit protein uS15.